The primary structure comprises 130 residues: Small ribosomal subunit protein uS8 (130 aa).

It belongs to the universal ribosomal protein uS8 family. In terms of assembly, part of the 30S ribosomal subunit. Contacts proteins S5 and S12.

In terms of biological role, one of the primary rRNA binding proteins, it binds directly to 16S rRNA central domain where it helps coordinate assembly of the platform of the 30S subunit. The sequence is that of Small ribosomal subunit protein uS8 from Aliivibrio fischeri (strain ATCC 700601 / ES114) (Vibrio fischeri).